The chain runs to 282 residues: 4-diphosphocytidyl-2-C-methyl-D-erythritol kinase (282 aa).

Lys-9 is a catalytic residue. 98–108 (PMGGGLGGGSS) serves as a coordination point for ATP. Asp-140 is an active-site residue.

Belongs to the GHMP kinase family. IspE subfamily. Homodimer.

The enzyme catalyses 4-CDP-2-C-methyl-D-erythritol + ATP = 4-CDP-2-C-methyl-D-erythritol 2-phosphate + ADP + H(+). The protein operates within isoprenoid biosynthesis; isopentenyl diphosphate biosynthesis via DXP pathway; isopentenyl diphosphate from 1-deoxy-D-xylulose 5-phosphate: step 3/6. In terms of biological role, catalyzes the phosphorylation of the position 2 hydroxy group of 4-diphosphocytidyl-2C-methyl-D-erythritol. The polypeptide is 4-diphosphocytidyl-2-C-methyl-D-erythritol kinase (Salmonella paratyphi A (strain ATCC 9150 / SARB42)).